The sequence spans 392 residues: 5-azacytidine-induced protein 2 (392 aa).

The segment at 1-197 (MDALVEDDIC…IELQKAKQTD (197 aa)) is homodimerization. Coiled coils occupy residues 40-76 (ALVT…LIAR), 102-135 (DRDN…EVEL), and 166-196 (DLKI…AKQT). Residues 216–257 (SDNMQHAYWELKREMSNLHLVTQVQAELLRKLKTSTAIKKAC) form an interaction with TBK1 and IKBKE region. Phosphoserine is present on residues serine 318 and serine 353. The segment at 345 to 365 (EDNSWVFPSPPKSSETAFGET) is disordered.

As to quaternary structure, homodimer. Interacts with IKBKE, TBK1 and TICAM1. Interacts with TAX1BP1. Interacts with CALCOCO2. In terms of processing, ubiquitinated via 'Lys-48'-linked polyubiquitination by TRIM38, leading to its degradation.

It is found in the cytoplasm. In terms of biological role, adapter protein which binds TBK1 and IKBKE playing a role in antiviral innate immunity. Activates serine/threonine-protein kinase TBK1 and facilitates its oligomerization. Enhances the phosphorylation of NF-kappa-B p65 subunit RELA by TBK1. Promotes TBK1-induced as well as TNF-alpha or PMA-induced activation of NF-kappa-B. Participates in IFNB promoter activation via TICAM1. This Pongo abelii (Sumatran orangutan) protein is 5-azacytidine-induced protein 2 (AZI2).